A 429-amino-acid polypeptide reads, in one-letter code: Glutamate-1-semialdehyde 2,1-aminomutase (429 aa).

An N6-(pyridoxal phosphate)lysine modification is found at K267.

Belongs to the class-III pyridoxal-phosphate-dependent aminotransferase family. HemL subfamily. In terms of assembly, homodimer. Pyridoxal 5'-phosphate serves as cofactor.

Its subcellular location is the cytoplasm. The enzyme catalyses (S)-4-amino-5-oxopentanoate = 5-aminolevulinate. The protein operates within porphyrin-containing compound metabolism; protoporphyrin-IX biosynthesis; 5-aminolevulinate from L-glutamyl-tRNA(Glu): step 2/2. The sequence is that of Glutamate-1-semialdehyde 2,1-aminomutase from Xanthomonas oryzae pv. oryzae (strain PXO99A).